We begin with the raw amino-acid sequence, 79 residues long: Putative transmembrane protein ORF17 (79 aa).

2 consecutive transmembrane segments (helical) span residues 8 to 28 (LMIYFFLPVSYLLVGFVIMYY) and 50 to 70 (VFVMILLIWPFFLFLVVTTTI).

The protein localises to the host membrane. This is Putative transmembrane protein ORF17 from Haloarcula hispanica (His1V).